A 439-amino-acid polypeptide reads, in one-letter code: tRNA(Ile)-lysidine synthase (439 aa).

25 to 30 (SGGLDS) is an ATP binding site.

This sequence belongs to the tRNA(Ile)-lysidine synthase family.

The protein localises to the cytoplasm. The enzyme catalyses cytidine(34) in tRNA(Ile2) + L-lysine + ATP = lysidine(34) in tRNA(Ile2) + AMP + diphosphate + H(+). In terms of biological role, ligates lysine onto the cytidine present at position 34 of the AUA codon-specific tRNA(Ile) that contains the anticodon CAU, in an ATP-dependent manner. Cytidine is converted to lysidine, thus changing the amino acid specificity of the tRNA from methionine to isoleucine. This is tRNA(Ile)-lysidine synthase from Edwardsiella ictaluri (strain 93-146).